Consider the following 297-residue polypeptide: Formylmethanofuran--tetrahydromethanopterin formyltransferase (297 aa).

It belongs to the FTR family. As to quaternary structure, homotetramer.

It is found in the cytoplasm. The catalysed reaction is N-formylmethanofuran + 5,6,7,8-tetrahydromethanopterin + H(+) = N(5)-formyl-5,6,7,8-tetrahydromethanopterin + methanofuran. It functions in the pathway one-carbon metabolism; methanogenesis from CO(2); 5,10-methenyl-5,6,7,8-tetrahydromethanopterin from CO(2): step 2/3. Functionally, catalyzes the reversible transfer of a formyl group from formylmethanofuran (formyl-MFR) to tetrahydromethanopterin (H(4)MPT) to produce 5-formyl tetrahydromethanopterin (5-formyl-H(4)MPT) and methanofuran (MFR). The chain is Formylmethanofuran--tetrahydromethanopterin formyltransferase from Methanothermobacter thermautotrophicus (strain ATCC 29096 / DSM 1053 / JCM 10044 / NBRC 100330 / Delta H) (Methanobacterium thermoautotrophicum).